Here is a 98-residue protein sequence, read N- to C-terminus: Small ribosomal subunit protein eS24 (98 aa).

It belongs to the eukaryotic ribosomal protein eS24 family.

The sequence is that of Small ribosomal subunit protein eS24 from Thermococcus sibiricus (strain DSM 12597 / MM 739).